Reading from the N-terminus, the 347-residue chain is Spermidine/putrescine import ATP-binding protein PotA (347 aa).

The ABC transporter domain occupies 6-236 (IEIKNVYKEF…PKNAFVAKFI (231 aa)). 38 to 45 (GPSGCGKT) provides a ligand contact to ATP.

The protein belongs to the ABC transporter superfamily. Spermidine/putrescine importer (TC 3.A.1.11.1) family. As to quaternary structure, the complex is composed of two ATP-binding proteins (PotA), two transmembrane proteins (PotB and PotC) and a solute-binding protein (PotD).

Its subcellular location is the cell membrane. The enzyme catalyses ATP + H2O + polyamine-[polyamine-binding protein]Side 1 = ADP + phosphate + polyamineSide 2 + [polyamine-binding protein]Side 1.. Its function is as follows. Part of the ABC transporter complex PotABCD involved in spermidine/putrescine import. Responsible for energy coupling to the transport system. This is Spermidine/putrescine import ATP-binding protein PotA from Clostridium novyi (strain NT).